We begin with the raw amino-acid sequence, 985 residues long: UPF0182 protein Cgl0786/cg0896 (985 aa).

A run of 7 helical transmembrane segments spans residues 19–39, 63–83, 115–135, 176–196, 215–235, 262–282, and 290–310; these read VTWIFAIIALVILIAPMSVGF, IVLFVIFALIAGFVTWLAGYF, VMVIIPIFVALLAGLIGQRSW, SMMLIVAFLIALVGHYLMGGI, TQLAVTAGLWMLVKVAGYWLD, KIILLVIALFVAIAFFSAIFL, and LAVVLMLLSSVIIGAAWPLML. The segment at 904-944 is disordered; it reads KEAQDIEEVDGTATTPSTDETDTDTDQPATETPTAPVSEAE. Positions 929-939 are enriched in low complexity; that stretch reads DQPATETPTAP.

It belongs to the UPF0182 family.

It localises to the cell membrane. In Corynebacterium glutamicum (strain ATCC 13032 / DSM 20300 / JCM 1318 / BCRC 11384 / CCUG 27702 / LMG 3730 / NBRC 12168 / NCIMB 10025 / NRRL B-2784 / 534), this protein is UPF0182 protein Cgl0786/cg0896.